The chain runs to 391 residues: NADH-quinone oxidoreductase subunit D (391 aa).

The protein belongs to the complex I 49 kDa subunit family. In terms of assembly, NDH-1 is composed of 14 different subunits. Subunits NuoB, C, D, E, F, and G constitute the peripheral sector of the complex.

The protein resides in the cell inner membrane. It carries out the reaction a quinone + NADH + 5 H(+)(in) = a quinol + NAD(+) + 4 H(+)(out). Its function is as follows. NDH-1 shuttles electrons from NADH, via FMN and iron-sulfur (Fe-S) centers, to quinones in the respiratory chain. The immediate electron acceptor for the enzyme in this species is believed to be ubiquinone. Couples the redox reaction to proton translocation (for every two electrons transferred, four hydrogen ions are translocated across the cytoplasmic membrane), and thus conserves the redox energy in a proton gradient. The chain is NADH-quinone oxidoreductase subunit D from Rickettsia massiliae (strain Mtu5).